We begin with the raw amino-acid sequence, 129 residues long: Small ribosomal subunit protein uS11 (129 aa).

Belongs to the universal ribosomal protein uS11 family. Part of the 30S ribosomal subunit. Interacts with proteins S7 and S18. Binds to IF-3.

Located on the platform of the 30S subunit, it bridges several disparate RNA helices of the 16S rRNA. Forms part of the Shine-Dalgarno cleft in the 70S ribosome. The chain is Small ribosomal subunit protein uS11 from Levilactobacillus brevis (strain ATCC 367 / BCRC 12310 / CIP 105137 / JCM 1170 / LMG 11437 / NCIMB 947 / NCTC 947) (Lactobacillus brevis).